The primary structure comprises 507 residues: Maturase K (507 aa).

The protein belongs to the intron maturase 2 family. MatK subfamily.

It is found in the plastid. The protein localises to the chloroplast. In terms of biological role, usually encoded in the trnK tRNA gene intron. Probably assists in splicing its own and other chloroplast group II introns. The chain is Maturase K from Araucaria heterophylla (Norfolk Island pine).